Consider the following 207-residue polypeptide: Thiamine-phosphate synthase (207 aa).

4-amino-2-methyl-5-(diphosphooxymethyl)pyrimidine-binding positions include 35–39 and N67; that span reads QYRDK. Mg(2+)-binding residues include D68 and D86. T105 contacts 4-amino-2-methyl-5-(diphosphooxymethyl)pyrimidine. 132–134 is a 2-[(2R,5Z)-2-carboxy-4-methylthiazol-5(2H)-ylidene]ethyl phosphate binding site; it reads SVT. K135 contacts 4-amino-2-methyl-5-(diphosphooxymethyl)pyrimidine. Residue G162 coordinates 2-[(2R,5Z)-2-carboxy-4-methylthiazol-5(2H)-ylidene]ethyl phosphate.

Belongs to the thiamine-phosphate synthase family. Mg(2+) is required as a cofactor.

The enzyme catalyses 2-[(2R,5Z)-2-carboxy-4-methylthiazol-5(2H)-ylidene]ethyl phosphate + 4-amino-2-methyl-5-(diphosphooxymethyl)pyrimidine + 2 H(+) = thiamine phosphate + CO2 + diphosphate. It carries out the reaction 2-(2-carboxy-4-methylthiazol-5-yl)ethyl phosphate + 4-amino-2-methyl-5-(diphosphooxymethyl)pyrimidine + 2 H(+) = thiamine phosphate + CO2 + diphosphate. It catalyses the reaction 4-methyl-5-(2-phosphooxyethyl)-thiazole + 4-amino-2-methyl-5-(diphosphooxymethyl)pyrimidine + H(+) = thiamine phosphate + diphosphate. Its pathway is cofactor biosynthesis; thiamine diphosphate biosynthesis; thiamine phosphate from 4-amino-2-methyl-5-diphosphomethylpyrimidine and 4-methyl-5-(2-phosphoethyl)-thiazole: step 1/1. Functionally, condenses 4-methyl-5-(beta-hydroxyethyl)thiazole monophosphate (THZ-P) and 2-methyl-4-amino-5-hydroxymethyl pyrimidine pyrophosphate (HMP-PP) to form thiamine monophosphate (TMP). This is Thiamine-phosphate synthase from Pseudomonas putida (strain GB-1).